Reading from the N-terminus, the 192-residue chain is Ion-translocating oxidoreductase complex subunit A (192 aa).

6 consecutive transmembrane segments (helical) span residues 5–25 (LLLLISTVLVNNFVLVKFLGL), 39–59 (IGMSMATTFVLTLASILSYLV), 65–85 (LPFDLSYLRTMSFILVIAVVV), 102–122 (ALGIYLPLITTNCAVLGVALL), 134–154 (AIYGFGAAVGFSLVLILFSAM), and 171–191 (AIAMITAGLMSLAFMGFTGLV).

This sequence belongs to the NqrDE/RnfAE family. The complex is composed of six subunits: RnfA, RnfB, RnfC, RnfD, RnfE and RnfG.

Its subcellular location is the cell inner membrane. In terms of biological role, part of a membrane-bound complex that couples electron transfer with translocation of ions across the membrane. The protein is Ion-translocating oxidoreductase complex subunit A of Shewanella putrefaciens (strain CN-32 / ATCC BAA-453).